Reading from the N-terminus, the 456-residue chain is Bifunctional protein GlmU (456 aa).

A pyrophosphorylase region spans residues methionine 1–proline 228. UDP-N-acetyl-alpha-D-glucosamine is bound by residues leucine 10–glycine 13, lysine 24, glutamine 76, glycine 81–threonine 82, tyrosine 103–aspartate 105, glycine 138, glutamate 153, asparagine 168, and asparagine 226. Aspartate 105 contacts Mg(2+). Asparagine 226 provides a ligand contact to Mg(2+). Positions tryptophan 229–glutamine 249 are linker. An N-acetyltransferase region spans residues glycine 250 to proline 456. Arginine 332 and lysine 350 together coordinate UDP-N-acetyl-alpha-D-glucosamine. Catalysis depends on histidine 362, which acts as the Proton acceptor. 2 residues coordinate UDP-N-acetyl-alpha-D-glucosamine: tyrosine 365 and asparagine 376. Acetyl-CoA is bound by residues alanine 379, asparagine 385–tyrosine 386, serine 404, alanine 422, and arginine 439.

It in the N-terminal section; belongs to the N-acetylglucosamine-1-phosphate uridyltransferase family. This sequence in the C-terminal section; belongs to the transferase hexapeptide repeat family. In terms of assembly, homotrimer. Mg(2+) serves as cofactor.

It localises to the cytoplasm. The catalysed reaction is alpha-D-glucosamine 1-phosphate + acetyl-CoA = N-acetyl-alpha-D-glucosamine 1-phosphate + CoA + H(+). The enzyme catalyses N-acetyl-alpha-D-glucosamine 1-phosphate + UTP + H(+) = UDP-N-acetyl-alpha-D-glucosamine + diphosphate. It participates in nucleotide-sugar biosynthesis; UDP-N-acetyl-alpha-D-glucosamine biosynthesis; N-acetyl-alpha-D-glucosamine 1-phosphate from alpha-D-glucosamine 6-phosphate (route II): step 2/2. The protein operates within nucleotide-sugar biosynthesis; UDP-N-acetyl-alpha-D-glucosamine biosynthesis; UDP-N-acetyl-alpha-D-glucosamine from N-acetyl-alpha-D-glucosamine 1-phosphate: step 1/1. Its pathway is bacterial outer membrane biogenesis; LPS lipid A biosynthesis. Its function is as follows. Catalyzes the last two sequential reactions in the de novo biosynthetic pathway for UDP-N-acetylglucosamine (UDP-GlcNAc). The C-terminal domain catalyzes the transfer of acetyl group from acetyl coenzyme A to glucosamine-1-phosphate (GlcN-1-P) to produce N-acetylglucosamine-1-phosphate (GlcNAc-1-P), which is converted into UDP-GlcNAc by the transfer of uridine 5-monophosphate (from uridine 5-triphosphate), a reaction catalyzed by the N-terminal domain. This Xanthomonas axonopodis pv. citri (strain 306) protein is Bifunctional protein GlmU.